Here is a 316-residue protein sequence, read N- to C-terminus: Aspartate carbamoyltransferase catalytic subunit (316 aa).

Carbamoyl phosphate is bound by residues Arg-66 and Thr-67. Lys-94 is an L-aspartate binding site. Positions 116, 146, and 149 each coordinate carbamoyl phosphate. L-aspartate is bound by residues Arg-179 and Arg-234. Carbamoyl phosphate is bound by residues Gly-275 and Pro-276.

The protein belongs to the aspartate/ornithine carbamoyltransferase superfamily. ATCase family. In terms of assembly, heterododecamer (2C3:3R2) of six catalytic PyrB chains organized as two trimers (C3), and six regulatory PyrI chains organized as three dimers (R2).

It carries out the reaction carbamoyl phosphate + L-aspartate = N-carbamoyl-L-aspartate + phosphate + H(+). Its pathway is pyrimidine metabolism; UMP biosynthesis via de novo pathway; (S)-dihydroorotate from bicarbonate: step 2/3. Catalyzes the condensation of carbamoyl phosphate and aspartate to form carbamoyl aspartate and inorganic phosphate, the committed step in the de novo pyrimidine nucleotide biosynthesis pathway. The sequence is that of Aspartate carbamoyltransferase catalytic subunit from Nitrosomonas eutropha (strain DSM 101675 / C91 / Nm57).